Here is a 252-residue protein sequence, read N- to C-terminus: 5'-nucleotidase SurE (252 aa).

A divalent metal cation-binding residues include Asp8, Asp9, Ser39, and Asn91.

The protein belongs to the SurE nucleotidase family. Requires a divalent metal cation as cofactor.

Its subcellular location is the cytoplasm. The enzyme catalyses a ribonucleoside 5'-phosphate + H2O = a ribonucleoside + phosphate. In terms of biological role, nucleotidase that shows phosphatase activity on nucleoside 5'-monophosphates. The sequence is that of 5'-nucleotidase SurE from Bordetella bronchiseptica (strain ATCC BAA-588 / NCTC 13252 / RB50) (Alcaligenes bronchisepticus).